The primary structure comprises 137 residues: Proofreading thioesterase EntH (137 aa).

Catalysis depends on Glu63, which acts as the Nucleophile or proton acceptor.

It belongs to the thioesterase PaaI family. As to quaternary structure, homotetramer. Dimer of dimers. Interacts specifically with the aryl carrier protein (ArCP) domain of EntB.

The protein resides in the cytoplasm. It participates in siderophore biosynthesis; enterobactin biosynthesis. In terms of biological role, required for optimal enterobactin synthesis. Acts as a proofreading enzyme that prevents EntB misacylation by hydrolyzing the thioester bound existing between EntB and wrongly charged molecules. The protein is Proofreading thioesterase EntH of Shigella sonnei (strain Ss046).